The following is a 91-amino-acid chain: Putative septation protein SpoVG (91 aa).

Belongs to the SpoVG family.

Its function is as follows. Could be involved in septation. The protein is Putative septation protein SpoVG of Caldanaerobacter subterraneus subsp. tengcongensis (strain DSM 15242 / JCM 11007 / NBRC 100824 / MB4) (Thermoanaerobacter tengcongensis).